The chain runs to 57 residues: Small ribosomal subunit protein bS21 (57 aa).

The interval 32–57 (VRKRKHFEKPSVKRKKKSEAARKRKF) is disordered. The segment covering 33-57 (RKRKHFEKPSVKRKKKSEAARKRKF) has biased composition (basic residues).

Belongs to the bacterial ribosomal protein bS21 family.

The protein is Small ribosomal subunit protein bS21 of Shouchella clausii (strain KSM-K16) (Alkalihalobacillus clausii).